The following is a 313-amino-acid chain: 4-diphosphocytidyl-2-C-methyl-D-erythritol kinase (313 aa).

K10 is a catalytic residue. 95–105 (PVTAGLGGGSS) serves as a coordination point for ATP. The active site involves D136. The segment at 289–313 (HPRVSPWRSPRSASSPSTRRSSRPT) is disordered. Residues 292-307 (VSPWRSPRSASSPSTR) are compositionally biased toward low complexity.

Belongs to the GHMP kinase family. IspE subfamily.

It catalyses the reaction 4-CDP-2-C-methyl-D-erythritol + ATP = 4-CDP-2-C-methyl-D-erythritol 2-phosphate + ADP + H(+). It participates in isoprenoid biosynthesis; isopentenyl diphosphate biosynthesis via DXP pathway; isopentenyl diphosphate from 1-deoxy-D-xylulose 5-phosphate: step 3/6. Its function is as follows. Catalyzes the phosphorylation of the position 2 hydroxy group of 4-diphosphocytidyl-2C-methyl-D-erythritol. The chain is 4-diphosphocytidyl-2-C-methyl-D-erythritol kinase from Anaeromyxobacter dehalogenans (strain 2CP-C).